Consider the following 727-residue polypeptide: MPLFFRKRKPSEEARKRLEYQMCLAKEAGADDILDISKCELSEIPFGAFATCKVLQKKVLIVHTNHLTSLLPKSCSLLSLVTIKVLDLHENQLTALPDDMGQLTVLQVLNVERNQLTHLPRSIGNLLQLQTLNVKDNKLKELPDTLGELRSLRTLDISENEIQRLPQMLAHVRTLETLSLNALAMVYPPPEVCGAGTAAVQQFLCKESGLDYYPPSQYLLPVLEQDGAENTQDSPDGPASRFSREEAEWQNRFSDYEKRKEQKMLEKLEFERRLDLGQREHAELLQQSHSHKDEILQTVKQEQTRLEQDLSERQRCLDAERQQLQEQLKQTEQSIASRIQRLLQDNQRQKKSSEILKSLENERIRMEQLMSITQEETENLRQREIAAAMQQMLTESCKSRLIQMAYESQRQSLAQQACSSMAEMDKRFQQILSWQQMDQNKAISQILQESVMQKAAFEALQVKKDLMHRQIRNQIRLIETELLQLTQLELKRKSLDTETLQEMVSEQRWALSNLLQQLLKEKKQREEELHGILAELEAKSETKQENYWLIQYQRLLNQKPLSLKLQEEGMERRLVALLVELSAEHYLPLFAHHRISLDMLSRMSPGDLAKVGVSEAGLQHEILRRAQDLLAVPRVQPELKPLENEVLGALEPPTAPRELQESVRPSAPPAELDMPTSECVVCLEREAQMVFLTCGHVCCCQQCCQPLRTCPLCRQEISQRLRIYHSS.

6 LRR repeats span residues 30–51 (ADDI…AFAT), 56–77 (QKKV…SCSL), 82–103 (TIKV…MGQL), 105–126 (VLQV…IGNL), 128–150 (QLQT…GELR), and 151–172 (SLRT…LAHV). Positions 227–248 (GAENTQDSPDGPASRFSREEAE) are disordered. Position 234 is a phosphoserine (serine 234). Coiled coils occupy residues 241-382 (RFSR…NLRQ) and 469-547 (RQIR…QENY). Residues 569-632 (GMERRLVALL…LRRAQDLLAV (64 aa)) enclose the SAM domain. Serine 604 bears the Phosphoserine mark. Short sequence motifs (PTAP motif) lie at residues 653-656 (PTAP) and 665-668 (PSAP). The RING-type zinc-finger motif lies at 679 to 714 (CVVCLEREAQMVFLTCGHVCCCQQCCQPLRTCPLCR).

As to quaternary structure, interacts with TSG101. Interacts with PHF23. Interacts with FUS. Ubiquitination promoted by PHF23 leads to proteasomal degradation. In terms of tissue distribution, widely expressed.

It localises to the cytoplasm. The catalysed reaction is S-ubiquitinyl-[E2 ubiquitin-conjugating enzyme]-L-cysteine + [acceptor protein]-L-lysine = [E2 ubiquitin-conjugating enzyme]-L-cysteine + N(6)-ubiquitinyl-[acceptor protein]-L-lysine.. Its pathway is protein modification; protein ubiquitination. In terms of biological role, E3 ubiquitin-protein ligase that mediates monoubiquitination of TSG101 at multiple sites, leading to inactivate the ability of TSG101 to sort endocytic (EGF receptors) and exocytic (viral proteins) cargos. Bacterial recognition protein that defends the cytoplasm from invasive pathogens. Localizes to several intracellular bacterial pathogens and generates the bacteria-associated ubiquitin signal leading to autophagy-mediated intracellular bacteria degradation (xenophagy). This is E3 ubiquitin-protein ligase LRSAM1 from Mus musculus (Mouse).